A 493-amino-acid chain; its full sequence is Phospholipid transfer protein (493 aa).

The first 17 residues, 1-17 (MALFGALFLALLAGAHA), serve as a signal peptide directing secretion. The N-linked (GlcNAc...) (complex) asparagine glycan is linked to asparagine 64. N-linked (GlcNAc...) asparagine glycosylation is present at asparagine 94. The N-linked (GlcNAc...) (complex) asparagine glycan is linked to asparagine 117. Residue asparagine 143 is glycosylated (N-linked (GlcNAc...) asparagine). A disulfide bridge links cysteine 146 with cysteine 185. N-linked (GlcNAc...) (complex) asparagine glycosylation occurs at asparagine 245. Residue asparagine 398 is glycosylated (N-linked (GlcNAc...) asparagine).

Belongs to the BPI/LBP/Plunc superfamily. BPI/LBP family. Glycosylation is necessary for secretion and its phospholipid transfer activity. In terms of tissue distribution, widely expressed. Highest level of expression in the ovary, thymus and placenta, with moderate levels found in the pancreas, small intestine, testis, lung and prostrate. Low level expression in the kidney, liver and spleen, with very low levels found in the heart, colon, skeletal muscle, leukocytes and brain. Expressed in the cortical neurons.

The protein localises to the secreted. It localises to the nucleus. It carries out the reaction a 1,2-diacyl-sn-glycero-3-phosphocholine(in) = a 1,2-diacyl-sn-glycero-3-phosphocholine(out). The enzyme catalyses a 1,2-diacyl-sn-glycero-3-phosphoethanolamine(in) = a 1,2-diacyl-sn-glycero-3-phosphoethanolamine(out). The catalysed reaction is a 1,2-diacyl-sn-glycerol(in) = a 1,2-diacyl-sn-glycerol(out). It catalyses the reaction a 1,2-diacyl-sn-glycero-3-phosphate(in) = a 1,2-diacyl-sn-glycero-3-phosphate(out). It carries out the reaction a sphingomyelin(in) = a sphingomyelin(out). The enzyme catalyses a 1,2-diacyl-sn-glycero-3-phospho-(1'-sn-glycerol)(in) = a 1,2-diacyl-sn-glycero-3-phospho-(1'-sn-glycerol)(out). The catalysed reaction is a 1,2-diacyl-sn-glycero-3-phospho-(1D-myo-inositol)(in) = a 1,2-diacyl-sn-glycero-3-phospho-(1D-myo-inositol)(out). It catalyses the reaction 1-hexadecanoyl-2-(5Z,8Z,11Z,14Z-eicosatetraenoyl)-sn-glycero-3-phosphoethanolamine(in) = 1-hexadecanoyl-2-(5Z,8Z,11Z,14Z-eicosatetraenoyl)-sn-glycero-3-phosphoethanolamine(out). It carries out the reaction N-(hexadecanoyl)-sphing-4-enine-1-phosphocholine(in) = N-(hexadecanoyl)-sphing-4-enine-1-phosphocholine(out). The enzyme catalyses 1,2-dihexadecanoyl-sn-glycero-3-phosphocholine(in) = 1,2-dihexadecanoyl-sn-glycero-3-phosphocholine(out). Its function is as follows. Mediates the transfer of phospholipids and free cholesterol from triglyceride-rich lipoproteins (low density lipoproteins or LDL and very low density lipoproteins or VLDL) into high-density lipoproteins (HDL) as well as the exchange of phospholipids between triglyceride-rich lipoproteins themselves. Facilitates the transfer of a spectrum of different lipid molecules, including diacylglycerol, phosphatidic acid, sphingomyelin, phosphatidylcholine, phosphatidylinositol, phosphatidylglycerol, cerebroside and phosphatidyl ethanolamine. Plays an important role in HDL remodeling which involves modulating the size and composition of HDL. Also plays a key role in the uptake of cholesterol from peripheral cells and tissues that is subsequently transported to the liver for degradation and excretion. Two distinct forms of PLTP exist in plasma: an active form that can transfer phosphatidylcholine from phospholipid vesicles to HDL, and an inactive form that lacks this capability. The chain is Phospholipid transfer protein (PLTP) from Homo sapiens (Human).